The chain runs to 169 residues: Nucleoside diphosphate kinase 3 (169 aa).

Residues Lys-29, Arg-105, Thr-111, Arg-122, Val-129, and Asn-132 each coordinate ADP. The Pros-phosphohistidine intermediate role is filled by His-135.

The protein belongs to the NDK family. In terms of assembly, homohexamer. Interacts (via its N-terminal region) with KAT5; this interaction enables recruitment of NME3 at DNA damage sites where it plays a role in the repair of DNA. Found in association with several ciliary nephronophthisis proteins, including NEK8, CEP164, ANKS6. Requires Mg(2+) as cofactor.

It localises to the mitochondrion outer membrane. The protein localises to the cytoplasm. It is found in the cytoskeleton. The protein resides in the cilium basal body. It catalyses the reaction a 2'-deoxyribonucleoside 5'-diphosphate + ATP = a 2'-deoxyribonucleoside 5'-triphosphate + ADP. The enzyme catalyses a ribonucleoside 5'-diphosphate + ATP = a ribonucleoside 5'-triphosphate + ADP. In terms of biological role, catalyzes the phosphorylation of ribonucleosides and deoxyribonucleoside diphosphates, other than ATP, into the corresponding triphosphates with ATP as the major phosphate donor. The ATP gamma phosphate is transferred to the nucleoside diphosphate beta phosphate via a ping-pong mechanism, using a phosphorylated active-site intermediate. Through the catalyzed exchange of gamma-phosphate between di- and triphosphonucleosides participates in regulation of intracellular nucleotide homeostasis. Inhibits granulocyte differentiation. May be required for ciliary function during renal development. Independently of its kinase activity, facilitates mitochondrial tethering prior to membrane fusion through its direct membrane-binding and hexamerization. Implicated in repair of both single- and double-stranded breaks in DNA through its association with the ribonucleotide reductase complex (RNR complex) via its interaction with the histone acetyltransferase KAT5, this interaction enables recruitment of NME3 at DNA damage sites where it plays a role in the repair of DNA, independently of its kinase activity. This chain is Nucleoside diphosphate kinase 3 (Nme3), found in Mus musculus (Mouse).